Here is a 914-residue protein sequence, read N- to C-terminus: TRPM8 channel-associated factor 2 (914 aa).

Residues D541–G840 form the Peptidase M60 domain.

Belongs to the TCAF family. As to quaternary structure, interacts with TRPM8 (via N-terminus and C-terminus domains); the interaction inhibits TRPM8 channel activity. Interacts with TRPV6.

Its subcellular location is the cell membrane. Functionally, negatively regulates the plasma membrane cation channel TRPM8 activity. Involved in the recruitment of TRPM8 to the cell surface. Promotes prostate cancer cell migration stimulation in a TRPM8-dependent manner. The sequence is that of TRPM8 channel-associated factor 2 from Bos taurus (Bovine).